The primary structure comprises 327 residues: MEIKLIVLSLALLLDRFIGDPPLLWQRISHPVVLLGKAISWGEKNFNDSSLPPSTLRRNGMWLTVGLVAACIFAGLVIRSILPHAGTAGAIVEVVIVAILLAQKSLADHVQAVAQALRDDGIEGGRKAVSMIVGRNPDRLDEGGVSRAAIESLAENASDGIVAPAFWFLVGGLPGLFAYKLINTADSMIGHLNDRYRDFGRFAAKLDDVANYIPARLTGLLAALATSLGHGREAGRQALSIMCRDARLHRSPNAGWPEAAFAGALGLALAGPRQYGAETVEGPMLNATGKREAEARDIDAALVLFWSTMSLMTGLVIAASLVGLFVG.

Transmembrane regions (helical) follow at residues 61–78, 80–102, 160–182, and 300–322; these read MWLT…GLVI, SILP…ILLA, GIVA…YKLI, and AALV…ASLV.

The protein belongs to the CobD/CbiB family.

Its subcellular location is the cell membrane. It functions in the pathway cofactor biosynthesis; adenosylcobalamin biosynthesis. Functionally, converts cobyric acid to cobinamide by the addition of aminopropanol on the F carboxylic group. The chain is Cobalamin biosynthesis protein CobD from Brucella suis biovar 1 (strain 1330).